The primary structure comprises 211 residues: Urease accessory protein UreG (211 aa).

Residue 16 to 23 (GPVGSGKT) participates in GTP binding.

The protein belongs to the SIMIBI class G3E GTPase family. UreG subfamily. Homodimer. UreD, UreF and UreG form a complex that acts as a GTP-hydrolysis-dependent molecular chaperone, activating the urease apoprotein by helping to assemble the nickel containing metallocenter of UreC. The UreE protein probably delivers the nickel.

It is found in the cytoplasm. Facilitates the functional incorporation of the urease nickel metallocenter. This process requires GTP hydrolysis, probably effectuated by UreG. This Janthinobacterium sp. (strain Marseille) (Minibacterium massiliensis) protein is Urease accessory protein UreG.